Consider the following 30-residue polypeptide: Cyclotide mech-1 (30 aa).

Positions 1 to 30 form a cross-link, cyclopeptide (Gly-Asp); it reads GVIPCGESCVFIPCINKKKCSCKNKVCYRD. 3 cysteine pairs are disulfide-bonded: Cys-5–Cys-20, Cys-9–Cys-22, and Cys-14–Cys-27.

In terms of processing, this is a cyclic peptide. Post-translationally, contains 3 disulfide bonds.

Probably participates in a plant defense mechanism (Potential). Binds to and induces leakage in phospholipd membranes, particularly ones containing 1-palmitoyl-2-oleophosphatidylethanolamine (POPE). Not active against Gram-negative bacterium E.coli ATCC 25922 or Gram-positive bacterium S.aureus ATCC 25923 up to a concentration of 64 uM. This chain is Cyclotide mech-1, found in Melicytus chathamicus (Chatham Island mahoe).